A 132-amino-acid polypeptide reads, in one-letter code: Large ribosomal subunit protein uL14 (132 aa).

This sequence belongs to the universal ribosomal protein uL14 family. As to quaternary structure, part of the 50S ribosomal subunit. Forms a cluster with proteins L3 and L24e, part of which may contact the 16S rRNA in 2 intersubunit bridges.

Its function is as follows. Binds to 23S rRNA. Forms part of two intersubunit bridges in the 70S ribosome. This Thermoplasma acidophilum (strain ATCC 25905 / DSM 1728 / JCM 9062 / NBRC 15155 / AMRC-C165) protein is Large ribosomal subunit protein uL14.